Reading from the N-terminus, the 726-residue chain is Ribonuclease R (726 aa).

Residues 262–590 (RIDLRHLPFF…LVHRVIKNLL (329 aa)) enclose the RNB domain. An S1 motif domain is found at 642–723 (GDVLTGVISN…NERKIELSLY (82 aa)).

It belongs to the RNR ribonuclease family. RNase R subfamily. As to quaternary structure, monomer.

The protein resides in the cytoplasm. The enzyme catalyses Exonucleolytic cleavage in the 3'- to 5'-direction to yield nucleoside 5'-phosphates.. 3'-5' exoribonuclease that releases 5'-nucleoside monophosphates and is involved in maturation of structured RNAs. The protein is Ribonuclease R of Buchnera aphidicola subsp. Schizaphis graminum (strain Sg).